Here is a 556-residue protein sequence, read N- to C-terminus: Polypeptide N-acetylgalactosaminyltransferase 13 (556 aa).

The Cytoplasmic segment spans residues 1–4 (MRRF). Residues 5-27 (VYCKVVLATSLMWVLVDVFLLLY) traverse the membrane as a helical; Signal-anchor for type II membrane protein segment. Topologically, residues 28–556 (FSECNKCDDK…WLLRNMTLGT (529 aa)) are lumenal. Residues asparagine 94 and asparagine 116 are each glycosylated (N-linked (GlcNAc...) asparagine). 5 disulfide bridges follow: cysteine 105-cysteine 338, cysteine 329-cysteine 407, cysteine 441-cysteine 458, cysteine 481-cysteine 496, and cysteine 522-cysteine 539. Residues 114 to 224 (LPNTSVVIVF…LGWLEPLLAR (111 aa)) form a catalytic subdomain A region. Aspartate 155 and arginine 185 together coordinate substrate. Residues aspartate 208 and histidine 210 each contribute to the Mn(2+) site. Positions 284 to 346 (PVRTPTMAGG…TCSHVGHVFR (63 aa)) are catalytic subdomain B. Substrate is bound at residue tryptophan 315. A Mn(2+)-binding site is contributed by histidine 343. Positions 346 and 351 each coordinate substrate. Residues 428 to 550 (YSLGEIRNVE…GSRSQQWLLR (123 aa)) form the Ricin B-type lectin domain. Asparagine 551 is a glycosylation site (N-linked (GlcNAc...) asparagine).

It belongs to the glycosyltransferase 2 family. GalNAc-T subfamily. Mn(2+) serves as cofactor. In terms of tissue distribution, specifically expressed in neuronal cells. Expressed in fetal brain, whole adult brain, cerebral cortex and cerebellum. Not expressed in other tissues tested.

It is found in the golgi apparatus membrane. It carries out the reaction L-seryl-[protein] + UDP-N-acetyl-alpha-D-galactosamine = a 3-O-[N-acetyl-alpha-D-galactosaminyl]-L-seryl-[protein] + UDP + H(+). The catalysed reaction is L-threonyl-[protein] + UDP-N-acetyl-alpha-D-galactosamine = a 3-O-[N-acetyl-alpha-D-galactosaminyl]-L-threonyl-[protein] + UDP + H(+). The protein operates within protein modification; protein glycosylation. In terms of biological role, catalyzes the initial reaction in O-linked oligosaccharide biosynthesis, the transfer of an N-acetyl-D-galactosamine (GalNAc) residue from UDP-GalNAc to a serine or threonine residue on the protein receptor. Generates GalNAc-O-Ser/Thr structure also known as Tn antigen, which itself is immunogenic but also serves as a precursor for the synthesis of different mucin-type O-glycan core structures. Contributes to the synthesis of O-linked glycans on mucins and proteoglycans of the central nervous system. May promote neurogenesis through glycosylation and stabilization of PDPN. Its function is as follows. Can glycosylate both unmodified peptides and glycopeptides that already contain an O-linked GalNAc sugar. Transfers GalNAc to Thr-/Ser-rich tandem repeats GTTPSPVPTTSTTSAP of MUC5AC, specifically on Thr-3 of non-glycosylated MUC5AC peptide, on Thr-12 and Thr-13 of preglycosylated MUC5AC at Thr-3 (MUC5AC-3), on Thr-3 of preglycosylated MUC5AC at Thr-13 (MUC5AC-13) and on Thr-12 of preglycosylated MUC5AC at Thr-3 and Thr-13 (MUC5AC-3,13). Transfers GalNAc to three consecutive serine/threonine residues on SDC3 forming a triplet-Tn epitope expressed in Purkinje cells of the developing brain. Can glycosylate both unmodified peptides and glycopeptides that already contain an O-linked GalNAc sugar. Transfers GalNAc to Thr-/Ser-rich tandem repeats GTTPSPVPTTSTTSAP of MUC5AC, specifically on Thr-3 of non-glycosylated MUC5AC peptide, on Thr-12 and Thr-13 of preglycosylated MUC5AC at Thr-3 (MUC5AC-3), on Thr-3 of preglycosylated MUC5AC at Thr-13 (MUC5AC-13) and on Thr-12 of preglycosylated MUC5AC at Thr-3 and Thr-13 (MUC5AC-3,13). The chain is Polypeptide N-acetylgalactosaminyltransferase 13 (GALNT13) from Homo sapiens (Human).